The chain runs to 301 residues: MSWIIFYTVIAALLVLDLGIVHKKNTVMSFKESVLFSLFYFVIACLFGIYFYYNTGAEHAREYYTCFLIEKAMSLDNIFVISIIFQFFKIPGKYQHRVLFFGIIGVIIFRAIMIYGGTILINKFAWLLYIFAVILIATGIKTFYVSHKTFDIQNSYIYKSIVKNLNITPNLEGDKFVVKRNNKLYFTPLFISLVLIEAIDLVFAIDSIPAIFAITNDVYIIYTSNIFAILGLRALFFCLAEIVERFSYIKYSLALILIFIGFKIFIHHYIAIPAYVSLIVTITLLLFGIIASIIRKNMIDH.

The next 9 helical transmembrane spans lie at 1-21 (MSWI…LGIV), 33-53 (SVLF…YFYY), 72-92 (AMSL…KIPG), 101-121 (FGII…TILI), 124-144 (FAWL…KTFY), 185-205 (YFTP…VFAI), 220-240 (IIYT…FCLA), 246-266 (FSYI…KIFI), and 270-290 (IAIP…FGII).

Belongs to the TerC family.

It is found in the cell membrane. This is an uncharacterized protein from Rickettsia felis (strain ATCC VR-1525 / URRWXCal2) (Rickettsia azadi).